A 538-amino-acid chain; its full sequence is MSIINDENGRGYKVHLCKTNIAQNNNKFYDMELLDEGGDFIVKLINGRIGYRGVTQLKDFDDLDRAKKFFESKFYEKTHLHWEERDDEPVPNKYAVVELATNARQTEKEVKKEEPEPEPKVDEKNTRGRKKRGIVKEKKEIKKEEEPVEEVNEKLKELMKCICDEDVHLGLLKQLKFNEAFGRPIDCLSLAQLTTGYEILSKIEESIGGKSARRSTRGRPRVADRVLAVKSDGPSLHDINKYYSLIPHSFGFCVPPKIDSHAKIQAERELLDALKGSIEASLELKDLKKTASSKDIYQRLYERLPCHLEPVSEEIAGKIGDCLAMRGPTHCYKLSLIDAFELKDPNEIPTEAPVEVQEVPKKRGRKSTKTAAPTVPPPTTKRLLWHGTRVTNVFSILMNGLQFPVGDRCGLMFGNGVYFANVPTKSANYCCPEASKRVFMLLCEVETANPLVLYESEIDADEKMEKAKKTSVYAAGKHTPRDTVEINGIPAFKSNLETIEEETRLLYDEYVMFNKEHFKIKYVVEVKVDRLTAKEMMA.

In terms of domain architecture, WGR spans 1–94 (MSIINDENGR…RDDEPVPNKY (94 aa)). The tract at residues 104 to 133 (RQTEKEVKKEEPEPEPKVDEKNTRGRKKRG) is disordered. Basic and acidic residues predominate over residues 105–126 (QTEKEVKKEEPEPEPKVDEKNT). Positions 148-285 (VEEVNEKLKE…GSIEASLELK (138 aa)) constitute a PARP alpha-helical domain. The region spanning 309 to 535 (EPVSEEIAGK…VKVDRLTAKE (227 aa)) is the PARP catalytic domain. A disordered region spans residues 357 to 381 (QEVPKKRGRKSTKTAAPTVPPPTTK).

It belongs to the ARTD/PARP family.

The protein resides in the nucleus. The enzyme catalyses NAD(+) + (ADP-D-ribosyl)n-acceptor = nicotinamide + (ADP-D-ribosyl)n+1-acceptor + H(+).. It carries out the reaction L-aspartyl-[protein] + NAD(+) = 4-O-(ADP-D-ribosyl)-L-aspartyl-[protein] + nicotinamide. The catalysed reaction is L-glutamyl-[protein] + NAD(+) = 5-O-(ADP-D-ribosyl)-L-glutamyl-[protein] + nicotinamide. Its activity is regulated as follows. Inhibited by N-(6-oxo-5,6-dihydrophenanthridin-2-yl)-N,N-dimethylacetamide HCl (PJ34), 1,5-dihydroxyisoquinoline (DHQ) and 3-aminobenzamide (3AB). Its function is as follows. Poly[ADP-ribose] polymerase modifies various nuclear proteins by poly(ADP-ribosyl)ation, a post-translational modification synthesized after DNA damage that appears as an obligatory step in a detection/signaling pathway leading to the reparation of DNA strand breaks and programmed cell death. This Caenorhabditis elegans protein is Poly [ADP-ribose] polymerase 2.